The chain runs to 536 residues: Carboxypeptidase Y homolog A (536 aa).

An N-terminal signal peptide occupies residues 1-17; it reads MKFFTTGLLATAALAAA. Residues 18–124 constitute a propeptide that is removed on maturation; that stretch reads QEQQVLQAED…KLHNYDLRVK (107 aa). 5 cysteine pairs are disulfide-bonded: C172/C412, C306/C320, C330/C353, C337/C346, and C375/C382. N203 is a glycosylation site (N-linked (GlcNAc...) asparagine). S259 is a catalytic residue. Residue D451 is part of the active site. N502 is a glycosylation site (N-linked (GlcNAc...) asparagine). Residue H513 is part of the active site.

This sequence belongs to the peptidase S10 family.

Its subcellular location is the vacuole. The catalysed reaction is Release of a C-terminal amino acid with broad specificity.. Its function is as follows. Vacuolar carboxypeptidase involved in degradation of small peptides. Digests preferentially peptides containing an aliphatic or hydrophobic residue in P1' position, as well as methionine, leucine or phenylalanine in P1 position of ester substrate. This Trichophyton rubrum (Athlete's foot fungus) protein is Carboxypeptidase Y homolog A (cpyA).